A 396-amino-acid chain; its full sequence is Elongation factor Tu (396 aa).

The 196-residue stretch at 10-205 folds into the tr-type G domain; the sequence is KPHVNIGTIG…AVDSYIPTPE (196 aa). Positions 19–26 are G1; the sequence is GHVDHGKT. 19-26 lines the GTP pocket; it reads GHVDHGKT. Position 26 (Thr-26) interacts with Mg(2+). The tract at residues 60 to 64 is G2; that stretch reads GITIN. The segment at 81-84 is G3; that stretch reads DCPG. GTP is bound by residues 81 to 85 and 136 to 139; these read DCPGH and NKCD. The tract at residues 136 to 139 is G4; sequence NKCD. Positions 174–176 are G5; sequence SAK.

The protein belongs to the TRAFAC class translation factor GTPase superfamily. Classic translation factor GTPase family. EF-Tu/EF-1A subfamily. As to quaternary structure, monomer.

It is found in the cytoplasm. It catalyses the reaction GTP + H2O = GDP + phosphate + H(+). Functionally, GTP hydrolase that promotes the GTP-dependent binding of aminoacyl-tRNA to the A-site of ribosomes during protein biosynthesis. The sequence is that of Elongation factor Tu from Brevibacillus brevis (strain 47 / JCM 6285 / NBRC 100599).